The primary structure comprises 485 residues: Ribulose bisphosphate carboxylase large chain (485 aa).

Positions methionine 1–serine 2 are excised as a propeptide. The residue at position 3 (proline 3) is an N-acetylproline. The residue at position 14 (lysine 14) is an N6,N6,N6-trimethyllysine. Residues asparagine 123 and threonine 173 each contribute to the substrate site. Lysine 175 acts as the Proton acceptor in catalysis. Residue lysine 177 coordinates substrate. Residues lysine 201, aspartate 203, and glutamate 204 each contribute to the Mg(2+) site. N6-carboxylysine is present on lysine 201. The Proton acceptor role is filled by histidine 294. Positions 295, 327, and 379 each coordinate substrate.

It belongs to the RuBisCO large chain family. Type I subfamily. Heterohexadecamer of 8 large chains and 8 small chains; disulfide-linked. The disulfide link is formed within the large subunit homodimers. Mg(2+) serves as cofactor. The disulfide bond which can form in the large chain dimeric partners within the hexadecamer appears to be associated with oxidative stress and protein turnover.

The protein resides in the plastid. It is found in the chloroplast. It carries out the reaction 2 (2R)-3-phosphoglycerate + 2 H(+) = D-ribulose 1,5-bisphosphate + CO2 + H2O. The enzyme catalyses D-ribulose 1,5-bisphosphate + O2 = 2-phosphoglycolate + (2R)-3-phosphoglycerate + 2 H(+). In terms of biological role, ruBisCO catalyzes two reactions: the carboxylation of D-ribulose 1,5-bisphosphate, the primary event in carbon dioxide fixation, as well as the oxidative fragmentation of the pentose substrate in the photorespiration process. Both reactions occur simultaneously and in competition at the same active site. The polypeptide is Ribulose bisphosphate carboxylase large chain (Flaveria bidentis (Coastal plain yellowtops)).